The chain runs to 540 residues: ADP,ATP carrier protein 2 (540 aa).

11 helical membrane-spanning segments follow: residues 24-44 (FSKFVPLFLLAFFVGFNYCLL), 62-82 (VIPFLKVWGIVPGAVIVTMVY), 94-114 (VFYCFMAAFLGFFFLFAVIIY), 151-171 (IYYVMSELWSSVVLSMLFWGL), 223-243 (SVMLNLTMLITCSGLIMIWLY), 295-315 (LLGLAIIVLSYNLVIHLFEVV), 337-357 (ITTLIGVVSVLAAVLLTGQCI), 367-387 (LVTPLVMLVSGLLFFGTIFAA), 391-411 (ISIFGGVLGMTPLALAAWTGG), 458-478 (SGGSLIYQGLLVIFSSVAASL), and 480-500 (VIALVLLIIMVVWIAVVAYIG).

This sequence belongs to the ADP/ATP translocase tlc family.

It localises to the cell membrane. The chain is ADP,ATP carrier protein 2 (tlcB) from Chlamydia pneumoniae (Chlamydophila pneumoniae).